A 91-amino-acid chain; its full sequence is C-C motif chemokine 5 (91 aa).

Positions 1 to 23 (MKVSAAALCVILTTAALCVPASA) are cleaved as a signal peptide. 2 disulfides stabilise this stretch: Cys33-Cys57 and Cys34-Cys73.

It belongs to the intercrine beta (chemokine CC) family.

The protein localises to the secreted. Its function is as follows. Chemoattractant for blood monocytes, memory T-helper cells and eosinophils. Causes the release of histamine from basophils and activates eosinophils. May activate several chemokine receptors including CCR1, CCR3, CCR4 and CCR5. May also be an agonist of the G protein-coupled receptor GPR75. Together with GPR75, may play a role in neuron survival through activation of a downstream signaling pathway involving the PI3, Akt and MAP kinases. By activating GPR75 may also play a role in insulin secretion by islet cells. This chain is C-C motif chemokine 5 (CCL5), found in Cavia porcellus (Guinea pig).